The following is a 688-amino-acid chain: Zinc finger protein 770 (688 aa).

K11 participates in a covalent cross-link: Glycyl lysine isopeptide (Lys-Gly) (interchain with G-Cter in SUMO2). C2H2-type zinc fingers lie at residues 27–49 (YVCN…YLIH), 55–77 (FECD…QLTH), and 81–103 (FKCS…QQLH). Glycyl lysine isopeptide (Lys-Gly) (interchain with G-Cter in SUMO2) cross-links involve residues K112, K121, and K146. 3 C2H2-type zinc fingers span residues 160-182 (HACT…VLIH), 188-210 (FKCV…QLTH), and 216-238 (FQCC…KQIH). K262 is covalently cross-linked (Glycyl lysine isopeptide (Lys-Gly) (interchain with G-Cter in SUMO2)). The segment at 294–318 (FQCPKCEKCFESEQILNEHSCFPAR) adopts a C2H2-type 7; degenerate zinc-finger fold. Glycyl lysine isopeptide (Lys-Gly) (interchain with G-Cter in SUMO2) cross-links involve residues K420 and K437. C2H2-type zinc fingers lie at residues 475–497 (CPCD…YLIH), 503–525 (FGCN…EQTH), 623–645 (YRCS…YLIH), and 651–673 (FECS…QLTH). K681 is covalently cross-linked (Glycyl lysine isopeptide (Lys-Gly) (interchain with G-Cter in SUMO2)).

It belongs to the krueppel C2H2-type zinc-finger protein family.

The protein localises to the nucleus. In terms of biological role, may be involved in transcriptional regulation. In Pongo abelii (Sumatran orangutan), this protein is Zinc finger protein 770 (ZNF770).